Reading from the N-terminus, the 178-residue chain is MDSQGPIILEKSIKIEEVIKIANTSIIDIVTKTVTPEIKAPYELVDVEYDKMGSDYILSILVDKEGGITVEDTSDLTNIISPLLDTIDPDPFPNQYMLEVSSPGLERPLKTADSLKAAVGSYINVSLYQAIDKVKVFQGDLLAFDGETLTIDYLDKTRHKIVNIPYQAVAKVRMAVKL.

The protein belongs to the RimP family.

The protein localises to the cytoplasm. Functionally, required for maturation of 30S ribosomal subunits. The chain is Ribosome maturation factor RimP from Streptococcus pyogenes serotype M1.